The primary structure comprises 410 residues: LL-diaminopimelate aminotransferase (410 aa).

Tyr15 and Gly42 together coordinate substrate. Pyridoxal 5'-phosphate is bound by residues Tyr72, Ser108 to Lys109, Tyr132, Asn187, Tyr218, and Ser246 to Ser248. Substrate-binding residues include Lys109, Tyr132, and Asn187. Lys249 bears the N6-(pyridoxal phosphate)lysine mark. The pyridoxal 5'-phosphate site is built by Arg257 and Asn292. Positions 292 and 388 each coordinate substrate.

This sequence belongs to the class-I pyridoxal-phosphate-dependent aminotransferase family. LL-diaminopimelate aminotransferase subfamily. In terms of assembly, homodimer. Pyridoxal 5'-phosphate is required as a cofactor.

The enzyme catalyses (2S,6S)-2,6-diaminopimelate + 2-oxoglutarate = (S)-2,3,4,5-tetrahydrodipicolinate + L-glutamate + H2O + H(+). It participates in amino-acid biosynthesis; L-lysine biosynthesis via DAP pathway; LL-2,6-diaminopimelate from (S)-tetrahydrodipicolinate (aminotransferase route): step 1/1. Functionally, involved in the synthesis of meso-diaminopimelate (m-DAP or DL-DAP), required for both lysine and peptidoglycan biosynthesis. Catalyzes the direct conversion of tetrahydrodipicolinate to LL-diaminopimelate. This chain is LL-diaminopimelate aminotransferase, found in Thermosynechococcus vestitus (strain NIES-2133 / IAM M-273 / BP-1).